A 252-amino-acid polypeptide reads, in one-letter code: NAD-dependent protein deacetylase (252 aa).

A Deacetylase sirtuin-type domain is found at 2-243 (DSKRDEKILE…DRVVKELKKI (242 aa)). NAD(+) is bound by residues A28, T32, F39, R40, Q109, I111, D112, and H127. A nicotinamide-binding site is contributed by F39. Residues I111 and D112 each contribute to the nicotinamide site. H127 (proton acceptor) is an active-site residue. Zn(2+) contacts are provided by C135, C138, C148, and C150. NAD(+)-binding residues include T188, S189, and N211.

The protein belongs to the sirtuin family. Class U subfamily. The cofactor is Zn(2+).

It is found in the cytoplasm. The enzyme catalyses N(6)-acetyl-L-lysyl-[protein] + NAD(+) + H2O = 2''-O-acetyl-ADP-D-ribose + nicotinamide + L-lysyl-[protein]. Functionally, NAD-dependent protein deacetylase which modulates the activities of several enzymes which are inactive in their acetylated form. In Fusobacterium nucleatum subsp. nucleatum (strain ATCC 25586 / DSM 15643 / BCRC 10681 / CIP 101130 / JCM 8532 / KCTC 2640 / LMG 13131 / VPI 4355), this protein is NAD-dependent protein deacetylase.